Reading from the N-terminus, the 146-residue chain is Basic phospholipase A2 paradoxin-like alpha chain (146 aa).

Residues 1–27 (MHPAHLLVLLAVCVSLLGASDIPPLPL) form the signal peptide. 7 disulfide bridges follow: Cys38–Cys99, Cys54–Cys145, Cys56–Cys72, Cys71–Cys126, Cys78–Cys119, Cys88–Cys112, and Cys106–Cys117. Ca(2+)-binding residues include Tyr55, Gly57, and Gly59. The active site involves His75. Asp76 contacts Ca(2+). Asp120 is an active-site residue.

The protein belongs to the phospholipase A2 family. Group I subfamily. D49 sub-subfamily. Heterotrimer of alpha, beta, and gamma chains; non-covalently linked. Ca(2+) is required as a cofactor. In terms of tissue distribution, expressed by the venom gland.

It is found in the secreted. The enzyme catalyses a 1,2-diacyl-sn-glycero-3-phosphocholine + H2O = a 1-acyl-sn-glycero-3-phosphocholine + a fatty acid + H(+). In terms of biological role, heterotrimer: Snake venom phospholipase A2 (PLA2) heterotrimer that acts as a potent presynaptic neurotoxin by blocking synaptic transmission and synaptic vesicle recycling. May act by binding in a calcium-dependent fashion to neurotonal pentraxin-1 (NPTX1) and neurotonal pentraxin-2 (NPTX2), but not to neuronal pentraxin receptor (NPTXR). Also binds to taipoxin-associated calcium binding protein 49 (RCN2), a protein localized in the lumen of endoplasmic reticulum. Functionally, monomer (alpha chain): Snake venom phospholipase A2 (PLA2) alpha chain that possesses the same high enzymatic activity than the heterotrimer. PLA2 catalyzes the calcium-dependent hydrolysis of the 2-acyl groups in 3-sn-phosphoglycerides. This chain is Basic phospholipase A2 paradoxin-like alpha chain, found in Oxyuranus microlepidotus (Inland taipan).